The following is a 227-amino-acid chain: MFLNEKVGAVIVAAGQSRRMGGQDKIFARLSGKPVLAHTLSVFQQSPEIDDIALVVSEHNLKKAKELVKEYNFSKVIAICSGGELRQDSVSSGLTALCDCGWVLIHDGARPLLDPVSIPEGLEAAKLCGSAVAAVPLKDTVKEISPEGLVEKTLPREKLISVQTPQVFRADIIQKAYRRVGITATDDAQLVEKLKLPVKIFSGAYANIKITTPEDLLMAEILLKKGR.

Belongs to the IspD/TarI cytidylyltransferase family. IspD subfamily.

It catalyses the reaction 2-C-methyl-D-erythritol 4-phosphate + CTP + H(+) = 4-CDP-2-C-methyl-D-erythritol + diphosphate. It participates in isoprenoid biosynthesis; isopentenyl diphosphate biosynthesis via DXP pathway; isopentenyl diphosphate from 1-deoxy-D-xylulose 5-phosphate: step 2/6. Its function is as follows. Catalyzes the formation of 4-diphosphocytidyl-2-C-methyl-D-erythritol from CTP and 2-C-methyl-D-erythritol 4-phosphate (MEP). The sequence is that of 2-C-methyl-D-erythritol 4-phosphate cytidylyltransferase from Dehalococcoides mccartyi (strain ATCC BAA-2266 / KCTC 15142 / 195) (Dehalococcoides ethenogenes (strain 195)).